The sequence spans 156 residues: uncharacterized protein (156 aa).

This is an uncharacterized protein from Saccharomyces cerevisiae (strain ATCC 204508 / S288c) (Baker's yeast).